We begin with the raw amino-acid sequence, 359 residues long: Transcription factor MYB115 (359 aa).

The span at 1-17 (MYHQNLISSTPNQNSNP) shows a compositional bias: polar residues. Positions 1-21 (MYHQNLISSTPNQNSNPHDWD) are disordered. 2 consecutive HTH myb-type domains span residues 153–208 (KDII…RPNI) and 209–259 (KKND…RRLH). 2 consecutive DNA-binding regions (H-T-H motif) follow at residues 181–204 (WTSI…HNHL) and 232–255 (WTEI…NATK).

Accumulates in reproductive organs (e.g. flowers and siliques). Expressed at very low levels in vegetative organs.

It localises to the nucleus. In terms of biological role, transcription activator that recognizes the motif 5'-TAACGG-3' in the promoter of target genes. Promotes vegetative-to-embryonic transition and the formation of somatic embryos from root explants in a WUS-independent manner. Together with MYB118, activates the transcription of S-ACP-DES2/AAD2 and S-ACP-DES3/AAD3 thus promoting the biosynthesis of omega-7 monounsaturated fatty acid in seed endosperm. The chain is Transcription factor MYB115 from Arabidopsis thaliana (Mouse-ear cress).